The chain runs to 392 residues: Homoserine O-acetyltransferase (392 aa).

Residues 52-356 (NVVVVLHALT…ICGHDGFLVE (305 aa)) form the AB hydrolase-1 domain. The Nucleophile role is filled by S157. R227 serves as a coordination point for substrate. Catalysis depends on residues D320 and H350. Residue D351 participates in substrate binding. The interval 373 to 392 (SQSAGPGGAGPGSRKGTTRR) is disordered.

This sequence belongs to the AB hydrolase superfamily. MetX family. In terms of assembly, homodimer.

The protein localises to the cytoplasm. It catalyses the reaction L-homoserine + acetyl-CoA = O-acetyl-L-homoserine + CoA. Its pathway is amino-acid biosynthesis; L-methionine biosynthesis via de novo pathway; O-acetyl-L-homoserine from L-homoserine: step 1/1. Its function is as follows. Transfers an acetyl group from acetyl-CoA to L-homoserine, forming acetyl-L-homoserine. The protein is Homoserine O-acetyltransferase of Mycobacterium avium (strain 104).